Here is a 591-residue protein sequence, read N- to C-terminus: Aspartate--tRNA(Asp/Asn) ligase (591 aa).

Glutamate 176 contacts L-aspartate. The aspartate stretch occupies residues 200–203 (QLFK). Arginine 222 lines the L-aspartate pocket. ATP contacts are provided by residues 222–224 (RDE) and glutamine 231. Histidine 450 contributes to the L-aspartate binding site. Glutamate 484 lines the ATP pocket. L-aspartate is bound at residue arginine 491. An ATP-binding site is contributed by 536–539 (GLDR).

This sequence belongs to the class-II aminoacyl-tRNA synthetase family. Type 1 subfamily. In terms of assembly, homodimer.

It is found in the cytoplasm. The catalysed reaction is tRNA(Asx) + L-aspartate + ATP = L-aspartyl-tRNA(Asx) + AMP + diphosphate. Functionally, aspartyl-tRNA synthetase with relaxed tRNA specificity since it is able to aspartylate not only its cognate tRNA(Asp) but also tRNA(Asn). Reaction proceeds in two steps: L-aspartate is first activated by ATP to form Asp-AMP and then transferred to the acceptor end of tRNA(Asp/Asn). In Bacillus anthracis (strain CDC 684 / NRRL 3495), this protein is Aspartate--tRNA(Asp/Asn) ligase.